We begin with the raw amino-acid sequence, 223 residues long: ATP phosphoribosyltransferase (223 aa).

The protein belongs to the ATP phosphoribosyltransferase family. Short subfamily. In terms of assembly, heteromultimer composed of HisG and HisZ subunits.

It localises to the cytoplasm. The enzyme catalyses 1-(5-phospho-beta-D-ribosyl)-ATP + diphosphate = 5-phospho-alpha-D-ribose 1-diphosphate + ATP. Its pathway is amino-acid biosynthesis; L-histidine biosynthesis; L-histidine from 5-phospho-alpha-D-ribose 1-diphosphate: step 1/9. Its function is as follows. Catalyzes the condensation of ATP and 5-phosphoribose 1-diphosphate to form N'-(5'-phosphoribosyl)-ATP (PR-ATP). Has a crucial role in the pathway because the rate of histidine biosynthesis seems to be controlled primarily by regulation of HisG enzymatic activity. The sequence is that of ATP phosphoribosyltransferase from Desulfitobacterium hafniense (strain Y51).